The sequence spans 345 residues: Anthranilate phosphoribosyltransferase (345 aa).

5-phospho-alpha-D-ribose 1-diphosphate is bound by residues glycine 79, 82 to 83 (GD), threonine 87, 89 to 92 (NVST), 106 to 114 (KHGNRAVSG), and serine 118. An anthranilate-binding site is contributed by glycine 79. A Mg(2+)-binding site is contributed by serine 91. Asparagine 109 is an anthranilate binding site. Arginine 164 contacts anthranilate. Positions 223 and 224 each coordinate Mg(2+).

It belongs to the anthranilate phosphoribosyltransferase family. Homodimer. Mg(2+) serves as cofactor.

The catalysed reaction is N-(5-phospho-beta-D-ribosyl)anthranilate + diphosphate = 5-phospho-alpha-D-ribose 1-diphosphate + anthranilate. It functions in the pathway amino-acid biosynthesis; L-tryptophan biosynthesis; L-tryptophan from chorismate: step 2/5. In terms of biological role, catalyzes the transfer of the phosphoribosyl group of 5-phosphorylribose-1-pyrophosphate (PRPP) to anthranilate to yield N-(5'-phosphoribosyl)-anthranilate (PRA). The protein is Anthranilate phosphoribosyltransferase of Sulfurisphaera tokodaii (strain DSM 16993 / JCM 10545 / NBRC 100140 / 7) (Sulfolobus tokodaii).